The primary structure comprises 347 residues: Phosphoribosylformylglycinamidine cyclo-ligase (347 aa).

Belongs to the AIR synthase family.

It is found in the cytoplasm. The enzyme catalyses 2-formamido-N(1)-(5-O-phospho-beta-D-ribosyl)acetamidine + ATP = 5-amino-1-(5-phospho-beta-D-ribosyl)imidazole + ADP + phosphate + H(+). The protein operates within purine metabolism; IMP biosynthesis via de novo pathway; 5-amino-1-(5-phospho-D-ribosyl)imidazole from N(2)-formyl-N(1)-(5-phospho-D-ribosyl)glycinamide: step 2/2. This Yersinia enterocolitica serotype O:8 / biotype 1B (strain NCTC 13174 / 8081) protein is Phosphoribosylformylglycinamidine cyclo-ligase.